Consider the following 305-residue polypeptide: Lipoyl synthase (305 aa).

Cys41, Cys46, Cys52, Cys68, Cys72, Cys75, and Ser281 together coordinate [4Fe-4S] cluster. In terms of domain architecture, Radical SAM core spans 54-270 (GARRTATFMI…RKVAMDKGFK (217 aa)). Basic and acidic residues predominate over residues 283–298 (HADEQVNEAAKEKQRQ). The tract at residues 283-305 (HADEQVNEAAKEKQRQGEAQLNS) is disordered.

This sequence belongs to the radical SAM superfamily. Lipoyl synthase family. [4Fe-4S] cluster serves as cofactor.

The protein localises to the cytoplasm. It catalyses the reaction [[Fe-S] cluster scaffold protein carrying a second [4Fe-4S](2+) cluster] + N(6)-octanoyl-L-lysyl-[protein] + 2 oxidized [2Fe-2S]-[ferredoxin] + 2 S-adenosyl-L-methionine + 4 H(+) = [[Fe-S] cluster scaffold protein] + N(6)-[(R)-dihydrolipoyl]-L-lysyl-[protein] + 4 Fe(3+) + 2 hydrogen sulfide + 2 5'-deoxyadenosine + 2 L-methionine + 2 reduced [2Fe-2S]-[ferredoxin]. It functions in the pathway protein modification; protein lipoylation via endogenous pathway; protein N(6)-(lipoyl)lysine from octanoyl-[acyl-carrier-protein]. In terms of biological role, catalyzes the radical-mediated insertion of two sulfur atoms into the C-6 and C-8 positions of the octanoyl moiety bound to the lipoyl domains of lipoate-dependent enzymes, thereby converting the octanoylated domains into lipoylated derivatives. The sequence is that of Lipoyl synthase from Staphylococcus aureus (strain bovine RF122 / ET3-1).